The following is a 254-amino-acid chain: 3-deoxy-manno-octulosonate cytidylyltransferase (254 aa).

Belongs to the KdsB family.

The protein resides in the cytoplasm. It carries out the reaction 3-deoxy-alpha-D-manno-oct-2-ulosonate + CTP = CMP-3-deoxy-beta-D-manno-octulosonate + diphosphate. Its pathway is nucleotide-sugar biosynthesis; CMP-3-deoxy-D-manno-octulosonate biosynthesis; CMP-3-deoxy-D-manno-octulosonate from 3-deoxy-D-manno-octulosonate and CTP: step 1/1. It functions in the pathway bacterial outer membrane biogenesis; lipopolysaccharide biosynthesis. Activates KDO (a required 8-carbon sugar) for incorporation into bacterial lipopolysaccharide in Gram-negative bacteria. This is 3-deoxy-manno-octulosonate cytidylyltransferase from Chlamydia trachomatis serovar A (strain ATCC VR-571B / DSM 19440 / HAR-13).